We begin with the raw amino-acid sequence, 51 residues long: Ovomucoid (51 aa).

The 49-residue stretch at valine 3–cysteine 51 folds into the Kazal-like domain. 3 cysteine pairs are disulfide-bonded: cysteine 5-cysteine 35, cysteine 13-cysteine 32, and cysteine 21-cysteine 51. Asparagine 42 carries N-linked (GlcNAc...) asparagine glycosylation.

The protein localises to the secreted. The chain is Ovomucoid from Nothoprocta cinerascens (Brushland tinamou).